The primary structure comprises 1371 residues: DNA-directed RNA polymerase subunit beta' (1371 aa).

Residues Cys71, Cys73, Cys86, and Cys89 each contribute to the Zn(2+) site. Mg(2+) is bound by residues Asp461, Asp463, and Asp465. Zn(2+) contacts are provided by Cys803, Cys877, Cys884, and Cys887.

It belongs to the RNA polymerase beta' chain family. In terms of assembly, the RNAP catalytic core consists of 2 alpha, 1 beta, 1 beta' and 1 omega subunit. When a sigma factor is associated with the core the holoenzyme is formed, which can initiate transcription. It depends on Mg(2+) as a cofactor. The cofactor is Zn(2+).

The enzyme catalyses RNA(n) + a ribonucleoside 5'-triphosphate = RNA(n+1) + diphosphate. Its function is as follows. DNA-dependent RNA polymerase catalyzes the transcription of DNA into RNA using the four ribonucleoside triphosphates as substrates. The chain is DNA-directed RNA polymerase subunit beta' from Thermodesulfovibrio yellowstonii (strain ATCC 51303 / DSM 11347 / YP87).